The sequence spans 72 residues: MKAGIHPEYKAVSATCSCGNSFEFKSTLDKESIHLDVCDKCHPFYTGKQRIVDTGGRVDRFNKRFGALSSKK.

Zn(2+) contacts are provided by Cys-16, Cys-18, Cys-38, and Cys-41.

It belongs to the bacterial ribosomal protein bL31 family. Type A subfamily. In terms of assembly, part of the 50S ribosomal subunit. Requires Zn(2+) as cofactor.

Its function is as follows. Binds the 23S rRNA. The polypeptide is Large ribosomal subunit protein bL31 (Vibrio campbellii (strain ATCC BAA-1116)).